The chain runs to 657 residues: Protein mono-ADP-ribosyltransferase TIPARP (657 aa).

Positions 1–10 (MEVETTEPEP) are enriched in acidic residues. The disordered stretch occupies residues 1–22 (MEVETTEPEPDCVVQPPSPSDD). The residue at position 39 (Cys39) is an ADP-ribosylcysteine. Positions 41–48 (KKKQEQKR) match the Nuclear localization signal motif. Residues 121 to 154 (QLPEAHPSTDAPEQGVPIQDHSFPPETISGTVAD) are disordered. Residues 238–265 (ENGIEICMDFLQGTCIYGRDCLKHHTVL) form a C3H1-type zinc finger. One can recognise a WWE domain in the interval 333–411 (STPPCSNSNS…RRPLFRSCFI (79 aa)). The PARP catalytic domain maps to 449–657 (YPETWVYMHP…YEEVSNTVSI (209 aa)).

This sequence belongs to the ARTD/PARP family. As to quaternary structure, interacts with AHR. In terms of processing, auto-mono-ADP-ribosylated. Ubiquitously expressed.

Its subcellular location is the nucleus. The catalysed reaction is L-aspartyl-[protein] + NAD(+) = 4-O-(ADP-D-ribosyl)-L-aspartyl-[protein] + nicotinamide. The enzyme catalyses L-glutamyl-[protein] + NAD(+) = 5-O-(ADP-D-ribosyl)-L-glutamyl-[protein] + nicotinamide. It catalyses the reaction L-cysteinyl-[protein] + NAD(+) = S-(ADP-D-ribosyl)-L-cysteinyl-[protein] + nicotinamide + H(+). In terms of biological role, ADP-ribosyltransferase that mediates mono-ADP-ribosylation of glutamate, aspartate and cysteine residues on target proteins. Acts as a negative regulator of AHR by mediating mono-ADP-ribosylation of AHR, leading to inhibit transcription activator activity of AHR. This is Protein mono-ADP-ribosyltransferase TIPARP from Mus musculus (Mouse).